We begin with the raw amino-acid sequence, 84 residues long: Exodeoxyribonuclease 7 small subunit (84 aa).

This sequence belongs to the XseB family. Heterooligomer composed of large and small subunits.

Its subcellular location is the cytoplasm. It catalyses the reaction Exonucleolytic cleavage in either 5'- to 3'- or 3'- to 5'-direction to yield nucleoside 5'-phosphates.. In terms of biological role, bidirectionally degrades single-stranded DNA into large acid-insoluble oligonucleotides, which are then degraded further into small acid-soluble oligonucleotides. The sequence is that of Exodeoxyribonuclease 7 small subunit from Azoarcus sp. (strain BH72).